The sequence spans 293 residues: N-acetylneuraminate lyase (293 aa).

Aceneuramate contacts are provided by serine 47 and threonine 48. The active-site Proton donor is the tyrosine 136. Lysine 164 (schiff-base intermediate with substrate) is an active-site residue. Aceneuramate contacts are provided by threonine 166, glycine 188, aspartate 190, glutamate 191, and serine 207.

The protein belongs to the DapA family. NanA subfamily. In terms of assembly, homotetramer.

It is found in the cytoplasm. The catalysed reaction is aceneuramate = aldehydo-N-acetyl-D-mannosamine + pyruvate. Its pathway is amino-sugar metabolism; N-acetylneuraminate degradation; D-fructose 6-phosphate from N-acetylneuraminate: step 1/5. Catalyzes the reversible aldol cleavage of N-acetylneuraminic acid (sialic acid; Neu5Ac) to form pyruvate and N-acetylmannosamine (ManNAc) via a Schiff base intermediate. This chain is N-acetylneuraminate lyase, found in Haemophilus influenzae (strain ATCC 51907 / DSM 11121 / KW20 / Rd).